The primary structure comprises 32 residues: Photosystem II reaction center protein T (32 aa).

A helical transmembrane segment spans residues 3–23 (ALVYTFLLIGTLMVIFFAVFF).

Belongs to the PsbT family. PSII is composed of 1 copy each of membrane proteins PsbA, PsbB, PsbC, PsbD, PsbE, PsbF, PsbH, PsbI, PsbJ, PsbK, PsbL, PsbM, PsbT, PsbX, PsbY, PsbZ, Psb30/Ycf12, at least 3 peripheral proteins of the oxygen-evolving complex and a large number of cofactors. It forms dimeric complexes.

The protein localises to the plastid. The protein resides in the chloroplast thylakoid membrane. In terms of biological role, found at the monomer-monomer interface of the photosystem II (PS II) dimer, plays a role in assembly and dimerization of PSII. PSII is a light-driven water plastoquinone oxidoreductase, using light energy to abstract electrons from H(2)O, generating a proton gradient subsequently used for ATP formation. The chain is Photosystem II reaction center protein T from Thalassiosira pseudonana (Marine diatom).